The primary structure comprises 254 residues: MANKIEVKELLEAGVHFGHMTRKWDPNMAPYIYMERNGIHIINLYKTAAKIEEANEALKKIAASGRKILFVATKKQAKDIVADKAKAANMPYITERWPGGMLTNFVTIRKAVKKMSSIDKMKKDGTFNTLSKKERLQVDRLRAKLEKNLGSIADMSRLPAALFVVDIKAEHIAIKEAQKLNIPVFAMVDTNSDPREVDYVIPANDDASKSIDKILSLVTTAVIEGLSDRGAEKEVEAAEEAPAAEAEAAPATEE.

Residues 228–254 (DRGAEKEVEAAEEAPAAEAEAAPATEE) form a disordered region. The segment covering 240–254 (EAPAAEAEAAPATEE) has biased composition (low complexity).

This sequence belongs to the universal ribosomal protein uS2 family.

The polypeptide is Small ribosomal subunit protein uS2 (Flavobacterium johnsoniae (strain ATCC 17061 / DSM 2064 / JCM 8514 / BCRC 14874 / CCUG 350202 / NBRC 14942 / NCIMB 11054 / UW101) (Cytophaga johnsonae)).